Reading from the N-terminus, the 142-residue chain is Glia maturation factor beta (142 aa).

Ser2 carries the post-translational modification N-acetylserine. The region spanning 4 to 139 (SLVVCDVAED…TEEWLREKLG (136 aa)) is the ADF-H domain.

This sequence belongs to the actin-binding proteins ADF family. GMF subfamily. In terms of processing, phosphorylated; stimulated by phorbol ester.

In terms of biological role, this protein causes differentiation of brain cells, stimulation of neural regeneration, and inhibition of proliferation of tumor cells. This is Glia maturation factor beta (Gmfb) from Rattus norvegicus (Rat).